A 443-amino-acid chain; its full sequence is Glycerol-3-phosphate acyltransferase 3-like (443 aa).

3 consecutive transmembrane segments (helical) span residues Trp15–Ile35, Ile146–Leu166, and Ile170–Leu190. The HXXXXD motif motif lies at His238 to Asp243. A helical transmembrane segment spans residues Ile358 to Leu378.

Belongs to the 1-acyl-sn-glycerol-3-phosphate acyltransferase family.

It is found in the endoplasmic reticulum membrane. It catalyses the reaction sn-glycerol 3-phosphate + an acyl-CoA = a 1-acyl-sn-glycero-3-phosphate + CoA. The catalysed reaction is a 1-acyl-sn-glycero-3-phosphate + an acyl-CoA = a 1,2-diacyl-sn-glycero-3-phosphate + CoA. Its pathway is glycerolipid metabolism; triacylglycerol biosynthesis. It participates in phospholipid metabolism; CDP-diacylglycerol biosynthesis; CDP-diacylglycerol from sn-glycerol 3-phosphate: step 1/3. In terms of biological role, may transfer the acyl-group from acyl-coA to the sn-1 position of glycerol-3-phosphate, an essential step in glycerolipid biosynthesis. Also transfers the acyl-group from acyl-coA to the sn-2 position of 1-acyl-sn-glycerol-3-phosphate (lysophosphatidic acid, or LPA), forming 1,2-diacyl-sn-glycerol-3-phosphate (phosphatidic acid, or PA). The polypeptide is Glycerol-3-phosphate acyltransferase 3-like (agpat9l) (Danio rerio (Zebrafish)).